The chain runs to 412 residues: ATP phosphoribosyltransferase regulatory subunit (412 aa).

The protein belongs to the class-II aminoacyl-tRNA synthetase family. HisZ subfamily. Heteromultimer composed of HisG and HisZ subunits.

It is found in the cytoplasm. Its pathway is amino-acid biosynthesis; L-histidine biosynthesis; L-histidine from 5-phospho-alpha-D-ribose 1-diphosphate: step 1/9. Functionally, required for the first step of histidine biosynthesis. May allow the feedback regulation of ATP phosphoribosyltransferase activity by histidine. The sequence is that of ATP phosphoribosyltransferase regulatory subunit from Dehalococcoides mccartyi (strain CBDB1).